The primary structure comprises 1072 residues: DNA-directed RNA polymerase subunit beta (1072 aa).

This sequence belongs to the RNA polymerase beta chain family. In terms of assembly, in plastids the minimal PEP RNA polymerase catalytic core is composed of four subunits: alpha, beta, beta', and beta''. When a (nuclear-encoded) sigma factor is associated with the core the holoenzyme is formed, which can initiate transcription.

It localises to the plastid. Its subcellular location is the chloroplast. The catalysed reaction is RNA(n) + a ribonucleoside 5'-triphosphate = RNA(n+1) + diphosphate. Its function is as follows. DNA-dependent RNA polymerase catalyzes the transcription of DNA into RNA using the four ribonucleoside triphosphates as substrates. This Crucihimalaya wallichii (Rock-cress) protein is DNA-directed RNA polymerase subunit beta.